The chain runs to 377 residues: 23S rRNA (uracil(747)-C(5))-methyltransferase RlmC (377 aa).

[4Fe-4S] cluster-binding residues include Cys3, Cys11, Cys14, and Cys87. Positions 212, 241, 262, and 307 each coordinate S-adenosyl-L-methionine. Cys334 (nucleophile) is an active-site residue.

This sequence belongs to the class I-like SAM-binding methyltransferase superfamily. RNA M5U methyltransferase family. RlmC subfamily.

It carries out the reaction uridine(747) in 23S rRNA + S-adenosyl-L-methionine = 5-methyluridine(747) in 23S rRNA + S-adenosyl-L-homocysteine + H(+). In terms of biological role, catalyzes the formation of 5-methyl-uridine at position 747 (m5U747) in 23S rRNA. The polypeptide is 23S rRNA (uracil(747)-C(5))-methyltransferase RlmC (Edwardsiella ictaluri (strain 93-146)).